The chain runs to 163 residues: UPF0416 protein RBE_0909 (163 aa).

This sequence belongs to the UPF0416 family.

The chain is UPF0416 protein RBE_0909 from Rickettsia bellii (strain RML369-C).